The chain runs to 177 residues: Large ribosomal subunit protein uL6 (177 aa).

It belongs to the universal ribosomal protein uL6 family. In terms of assembly, part of the 50S ribosomal subunit.

In terms of biological role, this protein binds to the 23S rRNA, and is important in its secondary structure. It is located near the subunit interface in the base of the L7/L12 stalk, and near the tRNA binding site of the peptidyltransferase center. The chain is Large ribosomal subunit protein uL6 from Azorhizobium caulinodans (strain ATCC 43989 / DSM 5975 / JCM 20966 / LMG 6465 / NBRC 14845 / NCIMB 13405 / ORS 571).